A 148-amino-acid chain; its full sequence is Large-conductance mechanosensitive channel (148 aa).

2 helical membrane-spanning segments follow: residues 16-36 (VMDL…VNSI) and 89-109 (GSFI…FLMV).

Belongs to the MscL family. In terms of assembly, homopentamer.

The protein resides in the cell inner membrane. Its function is as follows. Channel that opens in response to stretch forces in the membrane lipid bilayer. May participate in the regulation of osmotic pressure changes within the cell. This chain is Large-conductance mechanosensitive channel, found in Paraburkholderia xenovorans (strain LB400).